Reading from the N-terminus, the 425-residue chain is UDP-N-acetylglucosamine 1-carboxyvinyltransferase (425 aa).

22–23 lines the phosphoenolpyruvate pocket; the sequence is KN. R93 is a UDP-N-acetyl-alpha-D-glucosamine binding site. C117 (proton donor) is an active-site residue. A 2-(S-cysteinyl)pyruvic acid O-phosphothioketal modification is found at C117. Residues 122–126, D307, and V329 contribute to the UDP-N-acetyl-alpha-D-glucosamine site; that span reads RPIDL.

The protein belongs to the EPSP synthase family. MurA subfamily.

It localises to the cytoplasm. The catalysed reaction is phosphoenolpyruvate + UDP-N-acetyl-alpha-D-glucosamine = UDP-N-acetyl-3-O-(1-carboxyvinyl)-alpha-D-glucosamine + phosphate. It participates in cell wall biogenesis; peptidoglycan biosynthesis. Its function is as follows. Cell wall formation. Adds enolpyruvyl to UDP-N-acetylglucosamine. This chain is UDP-N-acetylglucosamine 1-carboxyvinyltransferase, found in Prosthecochloris aestuarii (strain DSM 271 / SK 413).